A 478-amino-acid polypeptide reads, in one-letter code: MNKTLNPQEVWIKAVRNLEGFFSSPRVIGYLKKASPSIEGESLIITFPNSHLASVMDDIEVYDATKKTILDSYPSIKEIKITISPDVLEKEITEEINDLVQSMEEEDFALIDHTKPVIPNFFDQNTRVNFGGGPNNHHPTTGVNPRFTFDNFVVGKSNELARAASISAAERPGKSFNPLFIYGDSGVGKTHLLHSIGNYAKFLFPSLRIKYVSSEDFTNDFINSISSGTSQKFQEKYRQIDILMVDDIQFLQKKQETQESFFHTFNSLHNSSRQLVISSDLPPKQLMGFEDRMRSRFECGLVCDIQKPDLETRIAILQKKCQNEKKEVSMEILTYIASCFSSSVRELEGALLRIFALASFNKEEINMTLAQKVLEDLGAQRGDKIDPIEIIEITAKHYDLAASDLCGNSRVANISIARQIAMYLCRELTDVSLPKLGYIFGRDHSTIIYATRRISDLIGKDRKTFSDIYKLTQFILRR.

A domain I, interacts with DnaA modulators region spans residues 1-95; that stretch reads MNKTLNPQEV…DVLEKEITEE (95 aa). Residues 96 to 141 are domain II; the sequence is INDLVQSMEEEDFALIDHTKPVIPNFFDQNTRVNFGGGPNNHHPTT. Residues 142-358 form a domain III, AAA+ region region; sequence GVNPRFTFDN…GALLRIFALA (217 aa). ATP-binding residues include Gly186, Gly188, Lys189, and Thr190. Residues 359–478 are domain IV, binds dsDNA; sequence SFNKEEINMT…YKLTQFILRR (120 aa).

It belongs to the DnaA family. In terms of assembly, oligomerizes as a right-handed, spiral filament on DNA at oriC.

It localises to the cytoplasm. Functionally, plays an essential role in the initiation and regulation of chromosomal replication. ATP-DnaA binds to the origin of replication (oriC) to initiate formation of the DNA replication initiation complex once per cell cycle. Binds the DnaA box (a 9 base pair repeat at the origin) and separates the double-stranded (ds)DNA. Forms a right-handed helical filament on oriC DNA; dsDNA binds to the exterior of the filament while single-stranded (ss)DNA is stabiized in the filament's interior. The ATP-DnaA-oriC complex binds and stabilizes one strand of the AT-rich DNA unwinding element (DUE), permitting loading of DNA polymerase. After initiation quickly degrades to an ADP-DnaA complex that is not apt for DNA replication. Binds acidic phospholipids. This Tropheryma whipplei (strain TW08/27) (Whipple's bacillus) protein is Chromosomal replication initiator protein DnaA.